Reading from the N-terminus, the 304-residue chain is Mycothiol acetyltransferase (304 aa).

N-acetyltransferase domains lie at 16 to 155 and 164 to 304; these read AHVE…RTGL and VALS…YRRA. Glutamate 46 lines the 1D-myo-inositol 2-(L-cysteinylamino)-2-deoxy-alpha-D-glucopyranoside pocket. 87–89 serves as a coordination point for acetyl-CoA; that stretch reads LVV. 1D-myo-inositol 2-(L-cysteinylamino)-2-deoxy-alpha-D-glucopyranoside-binding residues include glutamate 190, lysine 230, and glutamate 237. Acetyl-CoA-binding positions include 241-243 and 248-254; these read LGV and AARGLGS. Tyrosine 275 contacts 1D-myo-inositol 2-(L-cysteinylamino)-2-deoxy-alpha-D-glucopyranoside.

This sequence belongs to the acetyltransferase family. MshD subfamily. As to quaternary structure, monomer.

The enzyme catalyses 1D-myo-inositol 2-(L-cysteinylamino)-2-deoxy-alpha-D-glucopyranoside + acetyl-CoA = mycothiol + CoA + H(+). Functionally, catalyzes the transfer of acetyl from acetyl-CoA to desacetylmycothiol (Cys-GlcN-Ins) to form mycothiol. The protein is Mycothiol acetyltransferase of Clavibacter sepedonicus (Clavibacter michiganensis subsp. sepedonicus).